A 332-amino-acid polypeptide reads, in one-letter code: Holliday junction branch migration complex subunit RuvB (332 aa).

The tract at residues 1-181 (MSRILDNEIM…FGITGHMEYY (181 aa)) is large ATPase domain (RuvB-L). ATP is bound by residues Leu20, Arg21, Gly62, Lys65, Thr66, Thr67, 128-130 (EDF), Arg171, Tyr181, and Arg218. Thr66 is a binding site for Mg(2+). Residues 182–252 (AHADLTEIVE…ITDKALTMLD (71 aa)) are small ATPAse domain (RuvB-S). Residues 255–332 (HEGLDYVDQK…EHLGYEYNEK (78 aa)) are head domain (RuvB-H). Residues Arg291, Arg310, Arg312, and Arg315 each coordinate DNA.

This sequence belongs to the RuvB family. In terms of assembly, homohexamer. Forms an RuvA(8)-RuvB(12)-Holliday junction (HJ) complex. HJ DNA is sandwiched between 2 RuvA tetramers; dsDNA enters through RuvA and exits via RuvB. An RuvB hexamer assembles on each DNA strand where it exits the tetramer. Each RuvB hexamer is contacted by two RuvA subunits (via domain III) on 2 adjacent RuvB subunits; this complex drives branch migration. In the full resolvosome a probable DNA-RuvA(4)-RuvB(12)-RuvC(2) complex forms which resolves the HJ.

It localises to the cytoplasm. The catalysed reaction is ATP + H2O = ADP + phosphate + H(+). In terms of biological role, the RuvA-RuvB-RuvC complex processes Holliday junction (HJ) DNA during genetic recombination and DNA repair, while the RuvA-RuvB complex plays an important role in the rescue of blocked DNA replication forks via replication fork reversal (RFR). RuvA specifically binds to HJ cruciform DNA, conferring on it an open structure. The RuvB hexamer acts as an ATP-dependent pump, pulling dsDNA into and through the RuvAB complex. RuvB forms 2 homohexamers on either side of HJ DNA bound by 1 or 2 RuvA tetramers; 4 subunits per hexamer contact DNA at a time. Coordinated motions by a converter formed by DNA-disengaged RuvB subunits stimulates ATP hydrolysis and nucleotide exchange. Immobilization of the converter enables RuvB to convert the ATP-contained energy into a lever motion, pulling 2 nucleotides of DNA out of the RuvA tetramer per ATP hydrolyzed, thus driving DNA branch migration. The RuvB motors rotate together with the DNA substrate, which together with the progressing nucleotide cycle form the mechanistic basis for DNA recombination by continuous HJ branch migration. Branch migration allows RuvC to scan DNA until it finds its consensus sequence, where it cleaves and resolves cruciform DNA. This Streptococcus pneumoniae (strain CGSP14) protein is Holliday junction branch migration complex subunit RuvB.